Consider the following 409-residue polypeptide: MKIIAADVFVTSPSRNFVTLRITTEDGVTGIGDATLNGRELAVAAYLKEHVAQLLIGKDPHRIEDTWQFLYRSSYWRRGPVTMAAIAAVDMALWDIKGKVAGMPVYQLLGGASRNGLRAYGHASGADIPSLFDSVREHLELGYKSIRIQTAVPGIKAVYGVAAQAQASGERYDYEPAGRGAFPVEEDWDTRAYLRHLPSVFEAVRNEFGPEIPLLHDGHHRMTPIQAAKLGKALEPYDLFWLEDCTPAENQEALRLVRQHTTTPLAIGEIFNTVYDYQTIIKEQLIDYVRAASTHFGGISPLKKVMDFAAQYQIKSGFHGPTDISPVGFAAQLHVGLAIHNYGIQEYMQHSDKTNEVFHQSMTFKDGYLHPGDEPGIGVEFNEEAAAAFPYQQAYLPYNRLVDGTVHDW.

Aspartate 217 provides a ligand contact to Mg(2+). Position 219 (histidine 219) interacts with D-arabinonate. Mg(2+) contacts are provided by glutamate 243 and glutamate 269. D-arabinonate-binding residues include glutamate 269, arginine 290, histidine 319, and glutamate 346.

Belongs to the mandelate racemase/muconate lactonizing enzyme family. GalD subfamily.

Has no detectable activity with D-mannonate and with a panel of 70 other acid sugars (in vitro), in spite of the conservation of the residues that are expected to be important for catalytic activity and cofactor binding. May have evolved a divergent function. The chain is D-galactonate dehydratase family member Achl_0790 from Pseudarthrobacter chlorophenolicus (strain ATCC 700700 / DSM 12829 / CIP 107037 / JCM 12360 / KCTC 9906 / NCIMB 13794 / A6) (Arthrobacter chlorophenolicus).